Reading from the N-terminus, the 200-residue chain is Inducible T-cell costimulator (200 aa).

Residues 1–20 (MKPYFSCVFVFCFLIKLLTG) form the signal peptide. At 21 to 145 (ELNDLANHRM…LCCQLKLWLP (125 aa)) the chain is on the extracellular side. In terms of domain architecture, Ig-like V-type spans 30–133 (MFSFHDGGVQ…LSGGYLLIYE (104 aa)). 2 disulfides stabilise this stretch: Cys42–Cys109 and Cys63–Cys83. Asn89 and Asn123 each carry an N-linked (GlcNAc...) asparagine glycan. The chain crosses the membrane as a helical span at residues 146–166 (VGCAAFVAALLFGCIFIVWFA). The Cytoplasmic segment spans residues 167-200 (KKKYRSSVHDPNSEYMFMAAVNTNKKSRLAGMTS).

In terms of assembly, homodimer; disulfide-linked. Interacts with ICOSLG. Interacts with PIK3R1. Interacts with TBK1; this interaction is critical for the maturation of T follicular regulatory cells. In terms of processing, N-glycosylated. In terms of tissue distribution, strongly expressed in the spleen and lung. Lower expression seen in liver, kidney and testis.

It is found in the cell membrane. Stimulatory receptor expressed in activated or antigen-experienced T-cells that plays an important role in the immune response. Upon binding to its ligand ICOSL expressed on antigen presenting cells (APCs), delivers costimulatory signals that enhances all basic T-cell responses to a foreign antigen, namely proliferation, secretion of lymphokines including IL10, up-regulation of molecules that mediate cell-cell interaction, and effective help for antibody secretion by B-cells. Also acts as a costimulatory receptor critical for the differentiation of T follicular regulatory cells upon immune challenges such as viral infection. Mechanistically, potentiates TCR-induced calcium flux by augmenting PLCG1 activation and actin remodeling. In addition, activates PI3K signaling pathways independently of calcium flux. Essential both for efficient interaction between T and B-cells and for normal antibody responses to T-cell dependent antigens. Prevents the apoptosis of pre-activated T-cells. Plays a critical role in CD40-mediated class switching of immunoglobin isotypes. The polypeptide is Inducible T-cell costimulator (Icos) (Rattus norvegicus (Rat)).